Reading from the N-terminus, the 236-residue chain is Alpha-acetolactate decarboxylase (236 aa).

Belongs to the alpha-acetolactate decarboxylase family.

It catalyses the reaction (2S)-2-acetolactate + H(+) = (R)-acetoin + CO2. Its pathway is polyol metabolism; (R,R)-butane-2,3-diol biosynthesis; (R,R)-butane-2,3-diol from pyruvate: step 2/3. Converts acetolactate into acetoin. The sequence is that of Alpha-acetolactate decarboxylase (aldB) from Lactococcus lactis subsp. cremoris (strain MG1363).